A 50-amino-acid polypeptide reads, in one-letter code: Protein PndA (50 aa).

The helical transmembrane segment at 5-25 (TFLMMLIVVCVTILCFVWMVR) threads the bilayer.

It belongs to the Hok/Gef family.

It is found in the cell inner membrane. Its function is as follows. When overexpressed kill the cells from the inside by interfering with a vital function in the cell membrane. Functionally, toxic component of a type I toxin-antitoxin (TA) system. When expressed is involved in cellular Mg(2+) release and degradation of stable RNA. In Escherichia coli, this protein is Protein PndA (pndA).